The primary structure comprises 441 residues: Ribosomal protein uS12 methylthiotransferase RimO (441 aa).

The MTTase N-terminal domain maps to 7–117 (PKISFVSLGC…VLEAVHRARP (111 aa)). [4Fe-4S] cluster is bound by residues Cys-16, Cys-52, Cys-81, Cys-148, Cys-152, and Cys-155. Positions 134–371 (LTPRHYAYLK…MARQQAISAR (238 aa)) constitute a Radical SAM core domain. One can recognise a TRAM domain in the interval 374-440 (KRKVGTRQQV…AYDLHGTVAG (67 aa)).

Belongs to the methylthiotransferase family. RimO subfamily. It depends on [4Fe-4S] cluster as a cofactor.

It is found in the cytoplasm. It catalyses the reaction L-aspartate(89)-[ribosomal protein uS12]-hydrogen + (sulfur carrier)-SH + AH2 + 2 S-adenosyl-L-methionine = 3-methylsulfanyl-L-aspartate(89)-[ribosomal protein uS12]-hydrogen + (sulfur carrier)-H + 5'-deoxyadenosine + L-methionine + A + S-adenosyl-L-homocysteine + 2 H(+). Functionally, catalyzes the methylthiolation of an aspartic acid residue of ribosomal protein uS12. The polypeptide is Ribosomal protein uS12 methylthiotransferase RimO (Rhodopseudomonas palustris (strain ATCC BAA-98 / CGA009)).